Here is a 293-residue protein sequence, read N- to C-terminus: 4-diphosphocytidyl-2-C-methyl-D-erythritol kinase (293 aa).

Lys16 is a catalytic residue. Residue 99-109 (PMGAGLGGGSS) coordinates ATP. The active site involves Asp141.

Belongs to the GHMP kinase family. IspE subfamily.

It catalyses the reaction 4-CDP-2-C-methyl-D-erythritol + ATP = 4-CDP-2-C-methyl-D-erythritol 2-phosphate + ADP + H(+). Its pathway is isoprenoid biosynthesis; isopentenyl diphosphate biosynthesis via DXP pathway; isopentenyl diphosphate from 1-deoxy-D-xylulose 5-phosphate: step 3/6. Catalyzes the phosphorylation of the position 2 hydroxy group of 4-diphosphocytidyl-2C-methyl-D-erythritol. This is 4-diphosphocytidyl-2-C-methyl-D-erythritol kinase from Paraburkholderia phytofirmans (strain DSM 17436 / LMG 22146 / PsJN) (Burkholderia phytofirmans).